The sequence spans 121 residues: UPF0344 protein BCA_1194 (121 aa).

Transmembrane regions (helical) follow at residues 6-26 (ITAW…YSAG), 38-58 (LMYI…MKTA), 65-85 (WYGL…MVLV), and 92-112 (ATGA…YLGL).

It belongs to the UPF0344 family.

It localises to the cell membrane. In Bacillus cereus (strain 03BB102), this protein is UPF0344 protein BCA_1194.